The chain runs to 163 residues: MIILGIDPGTAITGYGVIEFIGNRYKPITYSCLRTEPDLPLDLRLKKLYQGLMDIIKRYQPDCMAVEELFFNKNARTALAVGHARGIALLAGANSSIPVAEYTPLQVKQAVTGYGKAEKQQIQFMVKTLLSLPEIPKPDDVADALAVAICHAQWSSTFGGRIK.

Active-site residues include Asp7, Glu67, and Asp140. Mg(2+) is bound by residues Asp7, Glu67, and Asp140.

It belongs to the RuvC family. In terms of assembly, homodimer which binds Holliday junction (HJ) DNA. The HJ becomes 2-fold symmetrical on binding to RuvC with unstacked arms; it has a different conformation from HJ DNA in complex with RuvA. In the full resolvosome a probable DNA-RuvA(4)-RuvB(12)-RuvC(2) complex forms which resolves the HJ. Mg(2+) serves as cofactor.

The protein resides in the cytoplasm. It carries out the reaction Endonucleolytic cleavage at a junction such as a reciprocal single-stranded crossover between two homologous DNA duplexes (Holliday junction).. Functionally, the RuvA-RuvB-RuvC complex processes Holliday junction (HJ) DNA during genetic recombination and DNA repair. Endonuclease that resolves HJ intermediates. Cleaves cruciform DNA by making single-stranded nicks across the HJ at symmetrical positions within the homologous arms, yielding a 5'-phosphate and a 3'-hydroxyl group; requires a central core of homology in the junction. The consensus cleavage sequence is 5'-(A/T)TT(C/G)-3'. Cleavage occurs on the 3'-side of the TT dinucleotide at the point of strand exchange. HJ branch migration catalyzed by RuvA-RuvB allows RuvC to scan DNA until it finds its consensus sequence, where it cleaves and resolves the cruciform DNA. This Desulforamulus reducens (strain ATCC BAA-1160 / DSM 100696 / MI-1) (Desulfotomaculum reducens) protein is Crossover junction endodeoxyribonuclease RuvC.